A 293-amino-acid chain; its full sequence is Lipoyl synthase (293 aa).

Residues C38, C43, C49, C64, C68, C71, and S277 each coordinate [4Fe-4S] cluster. A Radical SAM core domain is found at 50–266 (WSRGTATFLL…STIAKNAGIR (217 aa)).

Belongs to the radical SAM superfamily. Lipoyl synthase family. [4Fe-4S] cluster serves as cofactor.

The protein localises to the cytoplasm. The enzyme catalyses [[Fe-S] cluster scaffold protein carrying a second [4Fe-4S](2+) cluster] + N(6)-octanoyl-L-lysyl-[protein] + 2 oxidized [2Fe-2S]-[ferredoxin] + 2 S-adenosyl-L-methionine + 4 H(+) = [[Fe-S] cluster scaffold protein] + N(6)-[(R)-dihydrolipoyl]-L-lysyl-[protein] + 4 Fe(3+) + 2 hydrogen sulfide + 2 5'-deoxyadenosine + 2 L-methionine + 2 reduced [2Fe-2S]-[ferredoxin]. The protein operates within protein modification; protein lipoylation via endogenous pathway; protein N(6)-(lipoyl)lysine from octanoyl-[acyl-carrier-protein]: step 2/2. Its function is as follows. Catalyzes the radical-mediated insertion of two sulfur atoms into the C-6 and C-8 positions of the octanoyl moiety bound to the lipoyl domains of lipoate-dependent enzymes, thereby converting the octanoylated domains into lipoylated derivatives. This is Lipoyl synthase from Chlorobium chlorochromatii (strain CaD3).